An 84-amino-acid chain; its full sequence is Omega-theraphotoxin-Pm1a (84 aa).

The first 21 residues, 1–21, serve as a signal peptide directing secretion; it reads MKTSMLAVFVALPLAFVLTAA. A propeptide spanning residues 22 to 45 is cleaved from the precursor; it reads TEERAHPNELVNSLVELVKLDAER. 3 cysteine pairs are disulfide-bonded: Cys52-Cys66, Cys59-Cys71, and Cys65-Cys78.

The protein belongs to the neurotoxin 10 (Hwtx-1) family. 41 (Jztx-36) subfamily. As to expression, expressed by the venom gland.

It is found in the secreted. In terms of biological role, omega-conotoxins act at presynaptic membranes, they bind and block voltage-gated calcium channels (Cav). This toxin inhibits barium currents (IBa) mediated by L-type voltage-gated calcium channels Cav1.2/CACNA1C (IC(50)=825 nM) and Cav1.3/CACNA1C (IC(50)=2240 nM). The sequence is that of Omega-theraphotoxin-Pm1a from Pelinobius muticus (King baboon spider).